Here is a 206-residue protein sequence, read N- to C-terminus: Imidazole glycerol phosphate synthase subunit HisH (206 aa).

A Glutamine amidotransferase type-1 domain is found at serine 5–leucine 206. Cysteine 83 functions as the Nucleophile in the catalytic mechanism. Catalysis depends on residues histidine 187 and glutamate 189.

Heterodimer of HisH and HisF.

The protein localises to the cytoplasm. It catalyses the reaction 5-[(5-phospho-1-deoxy-D-ribulos-1-ylimino)methylamino]-1-(5-phospho-beta-D-ribosyl)imidazole-4-carboxamide + L-glutamine = D-erythro-1-(imidazol-4-yl)glycerol 3-phosphate + 5-amino-1-(5-phospho-beta-D-ribosyl)imidazole-4-carboxamide + L-glutamate + H(+). It carries out the reaction L-glutamine + H2O = L-glutamate + NH4(+). It functions in the pathway amino-acid biosynthesis; L-histidine biosynthesis; L-histidine from 5-phospho-alpha-D-ribose 1-diphosphate: step 5/9. Its function is as follows. IGPS catalyzes the conversion of PRFAR and glutamine to IGP, AICAR and glutamate. The HisH subunit catalyzes the hydrolysis of glutamine to glutamate and ammonia as part of the synthesis of IGP and AICAR. The resulting ammonia molecule is channeled to the active site of HisF. In Mycolicibacterium paratuberculosis (strain ATCC BAA-968 / K-10) (Mycobacterium paratuberculosis), this protein is Imidazole glycerol phosphate synthase subunit HisH.